The chain runs to 245 residues: Probable transcriptional regulatory protein Aflv_0709 (245 aa).

Positions 1–14 (MAGHSKWKNIQRRK) are enriched in basic residues. The tract at residues 1-21 (MAGHSKWKNIQRRKNAQDAKR) is disordered.

Belongs to the TACO1 family.

The protein resides in the cytoplasm. This chain is Probable transcriptional regulatory protein Aflv_0709, found in Anoxybacillus flavithermus (strain DSM 21510 / WK1).